The primary structure comprises 588 residues: Juvenile hormone esterase (588 aa).

Residues 1–23 form the signal peptide; that stretch reads MKFPKNLFLVLFYTSWKFCDVCA. Residues Asn79 and Asn83 are each glycosylated (N-linked (GlcNAc...) asparagine). Cys91 and Cys109 form a disulfide bridge. Residue Ser214 is the Acyl-ester intermediate of the active site. Residue Asn257 is glycosylated (N-linked (GlcNAc...) asparagine). Cys268 and Cys281 are joined by a disulfide. Glu350 serves as the catalytic Charge relay system. Residues Asn389, Asn396, and Asn472 are each glycosylated (N-linked (GlcNAc...) asparagine). The active-site Charge relay system is His479.

The protein belongs to the type-B carboxylesterase/lipase family.

The protein resides in the secreted. It carries out the reaction juvenile hormone III + H2O = juvenile hormone III carboxylate + methanol + H(+). Its activity is regulated as follows. Inhibited by 3-octylthio-1,1,1-trifluoro-2-propanone (OTFP), a specific inhibitor of juvenile hormone esterase (JHE), but not by diisopropyl fluorophosphate (DFP), a serine enzyme inhibitor. Functionally, may function as a juvenile hormone (JH)-specific degradation enzyme in vivo decreasing JH activity. Hydrolyzes JH III in vitro. Hydrolyzes effectively also methyl hepthylthioacetothioate (HEPTAT), a synthetic substrate. Of the general esterase substrates, it has preference for 2-naphthyl acetate (2-NA) and shows a weak activity for 1-NA and 4-nitrophenylacetate (4-NPA). The chain is Juvenile hormone esterase from Tribolium castaneum (Red flour beetle).